Reading from the N-terminus, the 93-residue chain is uncharacterized protein (93 aa).

The region spanning 24–85 is the TRAM domain; sequence QLQVGDTLKL…IQTQVGRLFF (62 aa).

It belongs to the ycf81 family.

This is an uncharacterized protein from Thermus thermophilus.